The sequence spans 470 residues: Argininosuccinate synthase (470 aa).

Residues 17–25 and A43 each bind ATP; that span reads AFSGGLDTS. Y99 is an L-citrulline binding site. Residues G129 and T131 each contribute to the ATP site. 3 residues coordinate L-aspartate: T131, N135, and D136. Residue N135 coordinates L-citrulline. D136 is an ATP binding site. L-citrulline-binding residues include R139 and S192. Position 194 (D194) interacts with ATP. L-citrulline is bound by residues T201, E203, and E280. A disordered region spans residues 448–470; it reads IASRGESSGDELLDRAAMESGTD.

It belongs to the argininosuccinate synthase family. Type 2 subfamily. As to quaternary structure, homotetramer.

The protein resides in the cytoplasm. It carries out the reaction L-citrulline + L-aspartate + ATP = 2-(N(omega)-L-arginino)succinate + AMP + diphosphate + H(+). Its pathway is amino-acid biosynthesis; L-arginine biosynthesis; L-arginine from L-ornithine and carbamoyl phosphate: step 2/3. The protein is Argininosuccinate synthase of Kineococcus radiotolerans (strain ATCC BAA-149 / DSM 14245 / SRS30216).